A 165-amino-acid polypeptide reads, in one-letter code: Chorismate pyruvate-lyase (165 aa).

3 residues coordinate substrate: Arg-77, Leu-115, and Glu-156.

The protein belongs to the UbiC family. In terms of assembly, monomer.

It is found in the cytoplasm. It carries out the reaction chorismate = 4-hydroxybenzoate + pyruvate. The protein operates within cofactor biosynthesis; ubiquinone biosynthesis. Functionally, removes the pyruvyl group from chorismate, with concomitant aromatization of the ring, to provide 4-hydroxybenzoate (4HB) for the ubiquinone pathway. In Salmonella typhi, this protein is Chorismate pyruvate-lyase.